We begin with the raw amino-acid sequence, 212 residues long: Large ribosomal subunit protein uL3 (212 aa).

Q154 carries the post-translational modification N5-methylglutamine.

The protein belongs to the universal ribosomal protein uL3 family. Part of the 50S ribosomal subunit. Forms a cluster with proteins L14 and L19. Post-translationally, methylated by PrmB.

One of the primary rRNA binding proteins, it binds directly near the 3'-end of the 23S rRNA, where it nucleates assembly of the 50S subunit. The chain is Large ribosomal subunit protein uL3 from Hydrogenovibrio crunogenus (strain DSM 25203 / XCL-2) (Thiomicrospira crunogena).